Consider the following 703-residue polypeptide: Lethal(3)malignant brain tumor-like protein 2 (703 aa).

Residues 1–70 (MEKPRGTEET…AGELPTSPLH (70 aa)) form a disordered region. Residue Ser13 is modified to Phosphoserine. Positions 15 to 25 (PMEEEEDDDLE) are enriched in acidic residues. The segment covering 35-49 (SYNSSAGSESSSYLE) has biased composition (low complexity). The span at 50 to 60 (ESSEAENEDRE) shows a compositional bias: acidic residues. Ser67 bears the Phosphoserine mark. The FCS-type zinc-finger motif lies at 81-116 (DGSGSEPAVCEMCGIVGTREAFFSKTKRFCSVSCSR). 4 residues coordinate Zn(2+): Cys90, Cys93, Cys110, and Cys114. MBT repeat units lie at residues 179–283 (FDWG…LVPP), 291–391 (TDWK…IKMS), 397–500 (MSHH…LTPP), and 508–604 (FDWE…LQPP). At Ser338 the chain carries Phosphoserine. Lys405 is covalently cross-linked (Glycyl lysine isopeptide (Lys-Gly) (interchain with G-Cter in SUMO2)). Disordered regions lie at residues 604–649 (PVSA…KKPL) and 672–703 (VKEEHQDLPSPDRSPSPLLPLPTESIKQERDS). Basic residues predominate over residues 619 to 634 (TKKKKKQFGKKRKRIP). Glycyl lysine isopeptide (Lys-Gly) (interchain with G-Cter in SUMO2) cross-links involve residues Lys647 and Lys673. A phosphoserine mark is found at Ser681, Ser685, and Ser687. A Glycyl lysine isopeptide (Lys-Gly) (interchain with G-Cter in SUMO1); alternate cross-link involves residue Lys698. A Glycyl lysine isopeptide (Lys-Gly) (interchain with G-Cter in SUMO2); alternate cross-link involves residue Lys698.

As to quaternary structure, part of the E2F6.com-1 complex in G0 phase composed of E2F6, MGA, MAX, TFDP1, CBX3, BAT8, EUHMTASE1, RING1, RNF2, MBLR, BAT8 and YAF2.

It localises to the nucleus. Functionally, putative Polycomb group (PcG) protein. PcG proteins maintain the transcriptionally repressive state of genes, probably via a modification of chromatin, rendering it heritably changed in its expressibility. Its association with a chromatin-remodeling complex suggests that it may contribute to prevent expression of genes that trigger the cell into mitosis. Binds to monomethylated and dimethylated 'Lys-20' on histone H4. Binds histone H3 peptides that are monomethylated or dimethylated on 'Lys-4', 'Lys-9' or 'Lys-27'. The polypeptide is Lethal(3)malignant brain tumor-like protein 2 (L3mbtl2) (Rattus norvegicus (Rat)).